The chain runs to 584 residues: Membrane protein insertase YidC (584 aa).

5 consecutive transmembrane segments (helical) span residues 5-25, 358-378, 428-448, 478-498, and 516-536; these read SVIG…FMAP, FIGN…LVTY, LGGC…FYVF, IPLY…AVFL, and IYIF…GLGL. The segment at 563-584 is disordered; it reads ALSPVVAAPPKAPKKKKNARKR. A compositionally biased stretch (basic residues) spans 574–584; the sequence is APKKKKNARKR.

This sequence belongs to the OXA1/ALB3/YidC family. Type 1 subfamily. As to quaternary structure, interacts with the Sec translocase complex via SecD. Specifically interacts with transmembrane segments of nascent integral membrane proteins during membrane integration.

Its subcellular location is the cell inner membrane. Required for the insertion and/or proper folding and/or complex formation of integral membrane proteins into the membrane. Involved in integration of membrane proteins that insert both dependently and independently of the Sec translocase complex, as well as at least some lipoproteins. Aids folding of multispanning membrane proteins. This Prosthecochloris aestuarii (strain DSM 271 / SK 413) protein is Membrane protein insertase YidC.